Here is a 330-residue protein sequence, read N- to C-terminus: Formylaminopyrimidine-binding protein (330 aa).

The signal sequence occupies residues 1 to 18 (MKSFKIISLLLAILFLAS). Residue C19 is the site of N-palmitoyl cysteine attachment. C19 is lipidated: S-diacylglycerol cysteine. Residues 38 to 39 (DW), Y90, N145, Y188, and E192 contribute to the substrate site.

It belongs to the NMT1 family. As to quaternary structure, the complex is likely composed of an ATP-binding protein (ThiZ), a transmembrane protein (ThiX) and a solute-binding protein (ThiY).

The protein localises to the cell membrane. Its pathway is cofactor biosynthesis; thiamine diphosphate biosynthesis. Functionally, participates in a thiamine pyrimidine salvage pathway as part of the ABC transporter complex ThiXYZ involved in the import of thiamine degradation products. Binds the formylaminopyrimidine N-formyl-4-amino-5-aminomethyl-2-methylpyrimidine (FAMP). Does not bind thiamine. In Halalkalibacterium halodurans (strain ATCC BAA-125 / DSM 18197 / FERM 7344 / JCM 9153 / C-125) (Bacillus halodurans), this protein is Formylaminopyrimidine-binding protein.